We begin with the raw amino-acid sequence, 494 residues long: Alpha-amylase-related protein (494 aa).

An N-terminal signal peptide occupies residues 1–20 (MIKFALALTLCLAGASLSLA). Pyrrolidone carboxylic acid is present on Q21. C48 and C104 form a disulfide bridge. Ca(2+) is bound by residues N118, Q169, and D178. Residues C157 and C171 are joined by a disulfide bond. R206 provides a ligand contact to chloride. D208 functions as the Nucleophile in the catalytic mechanism. Ca(2+) is bound at residue H212. E245 serves as the catalytic Proton donor. N308 and R343 together coordinate chloride. 3 cysteine pairs are disulfide-bonded: C376–C382, C418–C441, and C448–C460.

The protein belongs to the glycosyl hydrolase 13 family. Monomer. Ca(2+) serves as cofactor. It depends on chloride as a cofactor.

It is found in the secreted. It carries out the reaction Endohydrolysis of (1-&gt;4)-alpha-D-glucosidic linkages in polysaccharides containing three or more (1-&gt;4)-alpha-linked D-glucose units.. This Drosophila serrata (Fruit fly) protein is Alpha-amylase-related protein (Amyrel).